The following is a 911-amino-acid chain: Alpha-actinin-4 (911 aa).

The segment at 1–269 (MVDYHAANQS…YVSSFYHAFS (269 aa)) is actin-binding. A disordered region spans residues 8-31 (NQSYQYGPSSGSNGAGGGGTMGDY). Residues 12 to 26 (QYGPSSGSNGAGGGG) form an interaction with VCL region. Tyrosine 31 is modified (phosphotyrosine). Positions 40–61 (RDLLLDPAWEKQQRKTFTAWCN) are interaction with VCL. Calponin-homology (CH) domains are found at residues 50–154 (KQQR…LRFA) and 163–269 (TSAK…HAFS). The LXXLL motif signature appears at 84–88 (LMLLL). Residues 108-126 (KINNVNKALDFIASKGVKL) are interaction with VCL. The residue at position 114 (lysine 114) is an N6-acetyllysine. The polyphosphoinositide (PIP2)-binding stretch occupies residues 177–192 (TAPYKNVNVQNFHISW). The residue at position 214 (lysine 214) is an N6-acetyllysine. Phosphothreonine is present on threonine 249. Spectrin repeat units lie at residues 293 to 403 (HLME…WLLN), 413 to 518 (HLAE…ALEK), 528 to 639 (QLHL…ALLE), and 649 to 752 (HLRR…EVEN). Residues lysine 592 and lysine 625 each carry the N6-acetyllysine modification. The residue at position 696 (serine 696) is a Phosphoserine. The tract at residues 736 to 911 (WEQLLTTIAR…STALYGESDL (176 aa)) is mediates interaction with MICALL2. EF-hand domains lie at 765-800 (EQMQ…LGYD) and 806-841 (QGDA…ETTD). Aspartate 778 contributes to the Ca(2+) binding site. At lysine 779 the chain carries N6-acetyllysine. Ca(2+) contacts are provided by aspartate 780 and glutamate 789. Lysine 859 is subject to N6-acetyllysine. Serine 909 carries the post-translational modification Phosphoserine.

This sequence belongs to the alpha-actinin family. In terms of assembly, homodimer; antiparallel. Identified in a IGF2BP1-dependent mRNP granule complex containing untranslated mRNAs. Component of the CART complex, at least composed of ACTN4, HGS/HRS, MYO5B and TRIM3. Binds TRIM3 at the N-terminus. Interacts with MAGI1. Interacts with PDLIM2. Identified in a complex with CASK, IQGAP1, MAGI2, NPHS1, SPTAN1 and SPTBN1. Interacts with MICALL2 (preferentially in opened conformation); stimulated by RAB13 activation. Interacts with PPARG and RARA. Binds to VCL; this interaction triggers VCL conformational changes. Interacts with SEPTIN14. Interacts with IGSF8.

The protein localises to the nucleus. The protein resides in the cytoplasm. It is found in the cell junction. It localises to the cytoskeleton. Its subcellular location is the stress fiber. The protein localises to the perinuclear region. In terms of biological role, F-actin cross-linking protein which is thought to anchor actin to a variety of intracellular structures. This is a bundling protein. Probably involved in vesicular trafficking via its association with the CART complex. The CART complex is necessary for efficient transferrin receptor recycling but not for EGFR degradation. Involved in tight junction assembly in epithelial cells probably through interaction with MICALL2. Links MICALL2 to the actin cytoskeleton and recruits it to the tight junctions. May also function as a transcriptional coactivator, stimulating transcription mediated by the nuclear hormone receptors PPARG and RARA. Association with IGSF8 regulates the immune synapse formation and is required for efficient T-cell activation. The sequence is that of Alpha-actinin-4 from Bos taurus (Bovine).